Reading from the N-terminus, the 771-residue chain is 5-methyltetrahydropteroyltriglutamate--homocysteine methyltransferase (771 aa).

5-methyltetrahydropteroyltri-L-glutamate-binding positions include 16–19 (RELK) and K117. L-homocysteine-binding positions include 443–445 (IGS) and E496. Residues 443–445 (IGS) and E496 each bind L-methionine. 5-methyltetrahydropteroyltri-L-glutamate-binding positions include 527 to 528 (RC) and W573. D611 is an L-homocysteine binding site. D611 provides a ligand contact to L-methionine. Position 617 (E617) interacts with 5-methyltetrahydropteroyltri-L-glutamate. Zn(2+) is bound by residues H653, C655, and E677. H706 acts as the Proton donor in catalysis. C738 is a binding site for Zn(2+).

This sequence belongs to the vitamin-B12 independent methionine synthase family. It depends on Zn(2+) as a cofactor.

The catalysed reaction is 5-methyltetrahydropteroyltri-L-glutamate + L-homocysteine = tetrahydropteroyltri-L-glutamate + L-methionine. The protein operates within amino-acid biosynthesis; L-methionine biosynthesis via de novo pathway; L-methionine from L-homocysteine (MetE route): step 1/1. Catalyzes the transfer of a methyl group from 5-methyltetrahydrofolate to homocysteine resulting in methionine formation. This is 5-methyltetrahydropteroyltriglutamate--homocysteine methyltransferase from Stutzerimonas stutzeri (strain A1501) (Pseudomonas stutzeri).